A 1068-amino-acid polypeptide reads, in one-letter code: Cytospin-B (1068 aa).

The disordered stretch occupies residues 1–221; the sequence is MRSAAKPWNP…VDGTSVSPGD (221 aa). Arginine 2 is lipidated: N-myristoyl glycine. The span at 29–40 shows a compositional bias: low complexity; sequence SSGMKSSKSSTS. Phosphoserine is present on residues serine 38 and serine 55. Threonine 78 is subject to Phosphothreonine. Phosphoserine is present on residues serine 112, serine 131, serine 134, serine 137, and serine 138. The span at 126–144 shows a compositional bias: low complexity; sequence SNPRKSVSSPTSSNTPTPT. Threonine 142 carries the phosphothreonine modification. A compositionally biased stretch (basic and acidic residues) spans 154 to 200; it reads PKQENEGGEKAALESQVRELLAEAKAKDSEINRLRSELKKYKEKRTL. A phosphoserine mark is found at serine 218 and serine 241. 3 stretches are compositionally biased toward polar residues: residues 261–295, 309–323, and 337–367; these read PNSEGAASHTGDSSCPTSITQESSFGSPTGNQMSS, LRTSGSSSSDVTKAS, and ETPSRPLSSTSNPFKSSKCSTAGSSPNSVSE. The interval 261 to 367 is disordered; it reads PNSEGAASHT…AGSSPNSVSE (107 aa). Serine 361, serine 366, serine 369, and serine 425 each carry phosphoserine. Residues 579–773 are a coiled coil; it reads EVQEMLKVAR…QKELGDVQGH (195 aa). A disordered region spans residues 777–796; it reads VTSRAAPPPVDEEPESSEVD. Phosphoserine occurs at positions 847 and 863. Disordered stretches follow at residues 859-885 and 898-922; these read AAAVSPMQRHSTYSSVRPASRGVTQRL and GRTETLKPDPHLRKSPSLESLSRPP. Residues 866 to 875 are compositionally biased toward polar residues; the sequence is QRHSTYSSVR. Basic and acidic residues predominate over residues 898–909; sequence GRTETLKPDPHL. Phosphoserine occurs at positions 912 and 914. Residues 912–922 show a composition bias toward low complexity; sequence SPSLESLSRPP. Positions 962–1067 constitute a Calponin-homology (CH) domain; the sequence is GSKRNALLKW…YVAQIYKYFE (106 aa).

The protein belongs to the cytospin-A family. In terms of tissue distribution, highly expressed in testis. Barely detectable in other tissues. Also highly expressed in some cancer cell lines.

It is found in the nucleus. Its subcellular location is the membrane. This is Cytospin-B (SPECC1) from Homo sapiens (Human).